The sequence spans 193 residues: Holliday junction branch migration complex subunit RuvA (193 aa).

The interval 1 to 63 (MIAHIQGKLV…EDSHSLYGFA (63 aa)) is domain I. Residues 64-142 (EKSEKEIFKL…KLYDLDQVSI (79 aa)) form a domain II region. The flexible linker stretch occupies residues 143–145 (SQS). The domain III stretch occupies residues 145-193 (SNTNKDEALSALEVLGFIRKSAEKVVEKIVATMPDATVETIIKQALKNL).

This sequence belongs to the RuvA family. Homotetramer. Forms an RuvA(8)-RuvB(12)-Holliday junction (HJ) complex. HJ DNA is sandwiched between 2 RuvA tetramers; dsDNA enters through RuvA and exits via RuvB. An RuvB hexamer assembles on each DNA strand where it exits the tetramer. Each RuvB hexamer is contacted by two RuvA subunits (via domain III) on 2 adjacent RuvB subunits; this complex drives branch migration. In the full resolvosome a probable DNA-RuvA(4)-RuvB(12)-RuvC(2) complex forms which resolves the HJ.

Its subcellular location is the cytoplasm. The RuvA-RuvB-RuvC complex processes Holliday junction (HJ) DNA during genetic recombination and DNA repair, while the RuvA-RuvB complex plays an important role in the rescue of blocked DNA replication forks via replication fork reversal (RFR). RuvA specifically binds to HJ cruciform DNA, conferring on it an open structure. The RuvB hexamer acts as an ATP-dependent pump, pulling dsDNA into and through the RuvAB complex. HJ branch migration allows RuvC to scan DNA until it finds its consensus sequence, where it cleaves and resolves the cruciform DNA. This Flavobacterium psychrophilum (strain ATCC 49511 / DSM 21280 / CIP 103535 / JIP02/86) protein is Holliday junction branch migration complex subunit RuvA.